The chain runs to 110 residues: MKRITINIITMFIAAAVISLTGTAEAAEKQQQSPANVTLTDQQKKEIEQLEAEILKKRKDVISKYVQYGILPKERGEHIKNHLDKHFEMMKQNGFVPKHHPHPHKFEKRH.

The first 23 residues, M1–T23, serve as a signal peptide directing secretion.

This is an uncharacterized protein from Bacillus subtilis (strain 168).